A 191-amino-acid polypeptide reads, in one-letter code: dTTP/UTP pyrophosphatase (191 aa).

The active-site Proton acceptor is the Asp71.

This sequence belongs to the Maf family. YhdE subfamily. A divalent metal cation is required as a cofactor.

It is found in the cytoplasm. The catalysed reaction is dTTP + H2O = dTMP + diphosphate + H(+). The enzyme catalyses UTP + H2O = UMP + diphosphate + H(+). In terms of biological role, nucleoside triphosphate pyrophosphatase that hydrolyzes dTTP and UTP. May have a dual role in cell division arrest and in preventing the incorporation of modified nucleotides into cellular nucleic acids. The polypeptide is dTTP/UTP pyrophosphatase (Geobacter sulfurreducens (strain ATCC 51573 / DSM 12127 / PCA)).